The sequence spans 739 residues: Lysine decarboxylase (739 aa).

Lys367 bears the N6-(pyridoxal phosphate)lysine mark. Basic and acidic residues predominate over residues 714-726; it reads ADEPGDKPSDTVK. Residues 714–739 form a disordered region; the sequence is ADEPGDKPSDTVKKAPGKKPSAAKKS. Basic residues predominate over residues 728–739; sequence APGKKPSAAKKS.

The protein belongs to the Orn/Lys/Arg decarboxylase class-I family. It depends on pyridoxal 5'-phosphate as a cofactor.

The protein resides in the cytoplasm. The catalysed reaction is L-lysine + H(+) = cadaverine + CO2. The sequence is that of Lysine decarboxylase from Hafnia alvei.